A 96-amino-acid polypeptide reads, in one-letter code: Large ribosomal subunit protein bL28 (96 aa).

The protein belongs to the bacterial ribosomal protein bL28 family.

This chain is Large ribosomal subunit protein bL28, found in Methylobacterium nodulans (strain LMG 21967 / CNCM I-2342 / ORS 2060).